The primary structure comprises 650 residues: Primary amine oxidase 1 (650 aa).

The first 19 residues, 1–19, serve as a signal peptide directing secretion; that stretch reads MNTSILAILFLIQCVFTLG. Asparagine 2, asparagine 34, asparagine 62, and asparagine 149 each carry an N-linked (GlcNAc...) asparagine glycan. A disulfide bridge links cysteine 155 with cysteine 176. Asparagine 235 carries N-linked (GlcNAc...) asparagine glycosylation. 308-319 is a substrate binding site; it reads FMDIGEFGFGRS. The Proton acceptor role is filled by aspartate 310. An intrachain disulfide couples cysteine 329 to cysteine 355. 395 to 400 lines the substrate pocket; the sequence is LGNYDY. The Schiff-base intermediate with substrate; via topaquinone role is filled by tyrosine 398. Tyrosine 398 is modified (2',4',5'-topaquinone). Cu cation contacts are provided by histidine 453 and histidine 455. Mn(2+) contacts are provided by aspartate 462 and aspartate 464. Asparagine 486 is a glycosylation site (N-linked (GlcNAc...) asparagine). Residues aspartate 607 and isoleucine 608 each coordinate Mn(2+). Histidine 618 serves as a coordination point for Cu cation.

It belongs to the copper/topaquinone oxidase family. Homodimer. It depends on L-topaquinone as a cofactor. The cofactor is Cu cation. Zn(2+) serves as cofactor. Mn(2+) is required as a cofactor. In terms of processing, topaquinone (TPQ) is generated by copper-dependent autoxidation of a specific tyrosyl residue. In terms of tissue distribution, expressed in the vascular tissues at the division/differentiation transition zone.

It is found in the secreted. It catalyses the reaction a primary methyl amine + O2 + H2O = an aldehyde + H2O2 + NH4(+). With respect to regulation, repressed by semi-carbazide, a specific and irreversible inhibitor of copper amine oxidases. Functionally, oxidizes preferentially the aliphatic diamine putrescine with production of the corresponding aldehyde, ammonia and hydrogen peroxide. May be involved in the regulation of developmental programmed cell death (PCD) in both vascular tissue and the root cap. Required for jasmonic acid-(MeJA) mediated early protoxylem differentiation associated with putrescine levels reduction and H(2)O(2) accumulation in roots. The sequence is that of Primary amine oxidase 1 from Arabidopsis thaliana (Mouse-ear cress).